Reading from the N-terminus, the 446-residue chain is Tryptophan dimethylallyltransferase (446 aa).

L-tryptophan contacts are provided by residues 83–84 (IL) and Glu-92. Arg-103, Lys-189, and Tyr-191 together coordinate substrate. 2 residues coordinate L-tryptophan: Tyr-193 and Arg-246. Residues Arg-259, Lys-261, Tyr-263, Gln-345, and Tyr-347 each coordinate substrate.

The protein belongs to the tryptophan dimethylallyltransferase family. In terms of assembly, homodimer.

The catalysed reaction is L-tryptophan + dimethylallyl diphosphate = 4-(3-methylbut-2-enyl)-L-tryptophan + diphosphate. It functions in the pathway alkaloid biosynthesis; ergot alkaloid biosynthesis. Tryptophan dimethylallyltransferase; part of the gene cluster that mediates the biosynthesis of fungal ergot alkaloid. DmaW catalyzes the first step of ergot alkaloid biosynthesis by condensing dimethylallyl diphosphate (DMAP) and tryptophan to form 4-dimethylallyl-L-tryptophan. The second step is catalyzed by the methyltransferase easF that methylates 4-dimethylallyl-L-tryptophan in the presence of S-adenosyl-L-methionine, resulting in the formation of 4-dimethylallyl-L-abrine. The catalase easC and the FAD-dependent oxidoreductase easE then transform 4-dimethylallyl-L-abrine to chanoclavine-I which is further oxidized by easD in the presence of NAD(+), resulting in the formation of chanoclavine-I aldehyde. Chanoclavine-I aldehyde is the precursor of ergoamides and ergopeptines in Clavicipitaceae, and clavine-type alcaloids such as fumiclavine in Trichocomaceae. However, the metabolites downstream of chanoclavine-I aldehyde in Arthrodermataceae have not been identified yet. This is Tryptophan dimethylallyltransferase from Arthroderma otae (strain ATCC MYA-4605 / CBS 113480) (Microsporum canis).